Reading from the N-terminus, the 329-residue chain is Beta-ketoacyl-[acyl-carrier-protein] synthase III (329 aa).

Active-site residues include Cys123 and His256. Residues 257 to 261 (QANIR) are ACP-binding. Residue Asn286 is part of the active site.

It belongs to the thiolase-like superfamily. FabH family. Homodimer.

It is found in the cytoplasm. It carries out the reaction malonyl-[ACP] + acetyl-CoA + H(+) = 3-oxobutanoyl-[ACP] + CO2 + CoA. It participates in lipid metabolism; fatty acid biosynthesis. Catalyzes the condensation reaction of fatty acid synthesis by the addition to an acyl acceptor of two carbons from malonyl-ACP. Catalyzes the first condensation reaction which initiates fatty acid synthesis and may therefore play a role in governing the total rate of fatty acid production. Possesses both acetoacetyl-ACP synthase and acetyl transacylase activities. Its substrate specificity determines the biosynthesis of branched-chain and/or straight-chain of fatty acids. This Burkholderia vietnamiensis (strain G4 / LMG 22486) (Burkholderia cepacia (strain R1808)) protein is Beta-ketoacyl-[acyl-carrier-protein] synthase III.